The primary structure comprises 904 residues: DNA mismatch repair protein MutS (904 aa).

Position 655–662 (655–662 (GPNMGGKS)) interacts with ATP.

The protein belongs to the DNA mismatch repair MutS family.

Its function is as follows. This protein is involved in the repair of mismatches in DNA. It is possible that it carries out the mismatch recognition step. This protein has a weak ATPase activity. The protein is DNA mismatch repair protein MutS of Rhizorhabdus wittichii (strain DSM 6014 / CCUG 31198 / JCM 15750 / NBRC 105917 / EY 4224 / RW1) (Sphingomonas wittichii).